The sequence spans 196 residues: Chaperone protein TorD (196 aa).

The protein belongs to the TorD/DmsD family. TorD subfamily.

Its subcellular location is the cytoplasm. Functionally, involved in the biogenesis of TorA. Acts on TorA before the insertion of the molybdenum cofactor and, as a result, probably favors a conformation of the apoenzyme that is competent for acquiring the cofactor. The polypeptide is Chaperone protein TorD (Pasteurella multocida (strain Pm70)).